A 251-amino-acid polypeptide reads, in one-letter code: Triosephosphate isomerase (251 aa).

Substrate is bound at residue 9–11; the sequence is NWK. His95 acts as the Electrophile in catalysis. Catalysis depends on Glu167, which acts as the Proton acceptor. Residues Gly173, Ser212, and 233-234 each bind substrate; that span reads GG.

Belongs to the triosephosphate isomerase family. Homodimer.

It is found in the cytoplasm. The enzyme catalyses D-glyceraldehyde 3-phosphate = dihydroxyacetone phosphate. Its pathway is carbohydrate biosynthesis; gluconeogenesis. It participates in carbohydrate degradation; glycolysis; D-glyceraldehyde 3-phosphate from glycerone phosphate: step 1/1. Functionally, involved in the gluconeogenesis. Catalyzes stereospecifically the conversion of dihydroxyacetone phosphate (DHAP) to D-glyceraldehyde-3-phosphate (G3P). The sequence is that of Triosephosphate isomerase from Pseudomonas putida (strain ATCC 700007 / DSM 6899 / JCM 31910 / BCRC 17059 / LMG 24140 / F1).